Consider the following 423-residue polypeptide: uncharacterized protein (423 aa).

It belongs to the asfivirus E423R family.

Its subcellular location is the virion. This is an uncharacterized protein from Ornithodoros (relapsing fever ticks).